We begin with the raw amino-acid sequence, 274 residues long: NH(3)-dependent NAD(+) synthetase (274 aa).

46–53 contacts ATP; sequence GISGGQDS. Position 52 (aspartate 52) interacts with Mg(2+). Position 140 (arginine 140) interacts with deamido-NAD(+). Threonine 160 contacts ATP. Residue glutamate 165 participates in Mg(2+) binding. Deamido-NAD(+) is bound by residues lysine 173 and aspartate 180. Residues lysine 189 and threonine 211 each contribute to the ATP site. Position 260-261 (260-261) interacts with deamido-NAD(+); the sequence is HK.

Belongs to the NAD synthetase family. In terms of assembly, homodimer.

The enzyme catalyses deamido-NAD(+) + NH4(+) + ATP = AMP + diphosphate + NAD(+) + H(+). The protein operates within cofactor biosynthesis; NAD(+) biosynthesis; NAD(+) from deamido-NAD(+) (ammonia route): step 1/1. In terms of biological role, catalyzes the ATP-dependent amidation of deamido-NAD to form NAD. Uses ammonia as a nitrogen source. This is NH(3)-dependent NAD(+) synthetase from Streptococcus equi subsp. zooepidemicus (strain MGCS10565).